We begin with the raw amino-acid sequence, 307 residues long: Phosphoribosylaminoimidazole-succinocarboxamide synthase (307 aa).

The protein belongs to the SAICAR synthetase family.

The enzyme catalyses 5-amino-1-(5-phospho-D-ribosyl)imidazole-4-carboxylate + L-aspartate + ATP = (2S)-2-[5-amino-1-(5-phospho-beta-D-ribosyl)imidazole-4-carboxamido]succinate + ADP + phosphate + 2 H(+). It participates in purine metabolism; IMP biosynthesis via de novo pathway; 5-amino-1-(5-phospho-D-ribosyl)imidazole-4-carboxamide from 5-amino-1-(5-phospho-D-ribosyl)imidazole-4-carboxylate: step 1/2. The protein is Phosphoribosylaminoimidazole-succinocarboxamide synthase of Thermobifida fusca (strain YX).